Here is a 146-residue protein sequence, read N- to C-terminus: Oleosin (146 aa).

An N-acetylalanine modification is found at alanine 2. Transmembrane regions (helical) follow at residues 22–42 (ILGF…TGLT), 56–76 (VLIF…VAVA), and 77–97 (GFLS…WLYN). A Proline-knot motif is present at residues 55-66 (PVLIFFSPILIP).

This sequence belongs to the oleosin family. As to expression, expressed in pollen (at protein level).

The protein localises to the lipid droplet. The protein resides in the membrane. This chain is Oleosin, found in Pinus elliottii (Slash pine).